The primary structure comprises 458 residues: tRNA modification GTPase MnmE (458 aa).

Residues Arg26, Glu88, and Arg127 each coordinate (6S)-5-formyl-5,6,7,8-tetrahydrofolate. One can recognise a TrmE-type G domain in the interval 224–378; sequence GLSTAIIGRP…IEERINDIFF (155 aa). Residue Asn234 participates in K(+) binding. Residues 234-239, 253-259, and 278-281 contribute to the GTP site; these read NVGKSS, TDIEGTT, and DTAG. Ser238 lines the Mg(2+) pocket. Thr253, Ile255, and Thr258 together coordinate K(+). Thr259 provides a ligand contact to Mg(2+). Lys458 contacts (6S)-5-formyl-5,6,7,8-tetrahydrofolate.

Belongs to the TRAFAC class TrmE-Era-EngA-EngB-Septin-like GTPase superfamily. TrmE GTPase family. In terms of assembly, homodimer. Heterotetramer of two MnmE and two MnmG subunits. K(+) is required as a cofactor.

The protein localises to the cytoplasm. Functionally, exhibits a very high intrinsic GTPase hydrolysis rate. Involved in the addition of a carboxymethylaminomethyl (cmnm) group at the wobble position (U34) of certain tRNAs, forming tRNA-cmnm(5)s(2)U34. The polypeptide is tRNA modification GTPase MnmE (Streptococcus agalactiae serotype III (strain NEM316)).